Consider the following 455-residue polypeptide: Exodeoxyribonuclease 7 large subunit (455 aa).

Belongs to the XseA family. Heterooligomer composed of large and small subunits.

Its subcellular location is the cytoplasm. The enzyme catalyses Exonucleolytic cleavage in either 5'- to 3'- or 3'- to 5'-direction to yield nucleoside 5'-phosphates.. Its function is as follows. Bidirectionally degrades single-stranded DNA into large acid-insoluble oligonucleotides, which are then degraded further into small acid-soluble oligonucleotides. In Escherichia coli (strain SMS-3-5 / SECEC), this protein is Exodeoxyribonuclease 7 large subunit.